The primary structure comprises 347 residues: 4-hydroxy-2-oxovalerate aldolase 4 (347 aa).

The Pyruvate carboxyltransferase domain maps to 9–259 (ITIVDTTLRD…DTGVDLFPLI (251 aa)). Substrate-binding positions include 17-18 (RD), serine 171, and histidine 198. Residue aspartate 18 participates in Mn(2+) binding. Mn(2+) is bound by residues histidine 198 and histidine 200. Tyrosine 289 is a substrate binding site.

The protein belongs to the 4-hydroxy-2-oxovalerate aldolase family.

The enzyme catalyses (S)-4-hydroxy-2-oxopentanoate = acetaldehyde + pyruvate. The sequence is that of 4-hydroxy-2-oxovalerate aldolase 4 from Rhodococcus opacus (strain B4).